The sequence spans 417 residues: Serine hydroxymethyltransferase (417 aa).

N6-acetyllysine is present on Lys-54. (6S)-5,6,7,8-tetrahydrofolate-binding positions include Leu-121 and 125–127 (GHL). An N6-(pyridoxal phosphate)lysine modification is found at Lys-229. Residues Lys-250, Lys-285, and Lys-354 each carry the N6-acetyllysine modification. 355-357 (SPF) is a (6S)-5,6,7,8-tetrahydrofolate binding site. Residue Lys-375 is modified to N6-acetyllysine.

This sequence belongs to the SHMT family. Homodimer. Pyridoxal 5'-phosphate is required as a cofactor.

The protein localises to the cytoplasm. It carries out the reaction (6R)-5,10-methylene-5,6,7,8-tetrahydrofolate + glycine + H2O = (6S)-5,6,7,8-tetrahydrofolate + L-serine. It participates in one-carbon metabolism; tetrahydrofolate interconversion. It functions in the pathway amino-acid biosynthesis; glycine biosynthesis; glycine from L-serine: step 1/1. Its function is as follows. Catalyzes the reversible interconversion of serine and glycine with tetrahydrofolate (THF) serving as the one-carbon carrier. This reaction serves as the major source of one-carbon groups required for the biosynthesis of purines, thymidylate, methionine, and other important biomolecules. Also exhibits THF-independent aldolase activity toward beta-hydroxyamino acids, producing glycine and aldehydes, via a retro-aldol mechanism. This chain is Serine hydroxymethyltransferase, found in Shigella dysenteriae serotype 1 (strain Sd197).